The sequence spans 475 residues: UDP-glycosyltransferase 84A4 (475 aa).

His-20 acts as the Proton acceptor in catalysis. His-20 contributes to the an anthocyanidin binding site. Residues Gln-342, His-357, Trp-360, Asn-361, Ser-362, and Glu-365 each coordinate UDP-alpha-D-glucose. Gly-380 serves as a coordination point for an anthocyanidin. UDP-alpha-D-glucose is bound by residues Asp-381 and Gln-382.

The protein belongs to the UDP-glycosyltransferase family.

The catalysed reaction is (E)-4-coumarate + UDP-alpha-D-glucose = 4-O-(beta-D-glucosyl)-trans-4-coumarate + UDP + H(+). It carries out the reaction (E)-ferulate + UDP-alpha-D-glucose = 1-O-[(E)-feruloyl]-beta-D-glucose + UDP. The enzyme catalyses (E)-caffeate + UDP-alpha-D-glucose = 1-O-[(E)-caffeoyl]-beta-D-glucose + UDP. It catalyses the reaction (E)-sinapate + UDP-alpha-D-glucose = 1-O-(trans-sinapoyl)-beta-D-glucose + UDP. The catalysed reaction is (E)-cinnamate + UDP-alpha-D-glucose = 1-O-(trans-cinnamoyl)-beta-D-glucose + UDP. Its function is as follows. UDP-glucosyltransferase that forms glucose esters with phenylpropanoids. Glucosylates 4-coumarate, ferulate, caffeate, sinapate and cinnamate. The chain is UDP-glycosyltransferase 84A4 from Arabidopsis thaliana (Mouse-ear cress).